Consider the following 429-residue polypeptide: UDP-N-acetylglucosamine 1-carboxyvinyltransferase (429 aa).

Position 22-23 (22-23) interacts with phosphoenolpyruvate; the sequence is KN. R102 provides a ligand contact to UDP-N-acetyl-alpha-D-glucosamine. C126 acts as the Proton donor in catalysis. C126 carries the 2-(S-cysteinyl)pyruvic acid O-phosphothioketal modification. UDP-N-acetyl-alpha-D-glucosamine-binding positions include 131–135, D316, and I338; that span reads RPVDL.

It belongs to the EPSP synthase family. MurA subfamily.

Its subcellular location is the cytoplasm. The enzyme catalyses phosphoenolpyruvate + UDP-N-acetyl-alpha-D-glucosamine = UDP-N-acetyl-3-O-(1-carboxyvinyl)-alpha-D-glucosamine + phosphate. The protein operates within cell wall biogenesis; peptidoglycan biosynthesis. Cell wall formation. Adds enolpyruvyl to UDP-N-acetylglucosamine. The protein is UDP-N-acetylglucosamine 1-carboxyvinyltransferase of Nitrobacter hamburgensis (strain DSM 10229 / NCIMB 13809 / X14).